A 208-amino-acid chain; its full sequence is A-type ATP synthase subunit E (208 aa).

It belongs to the V-ATPase E subunit family. In terms of assembly, has multiple subunits with at least A(3), B(3), C, D, E, F, H, I and proteolipid K(x).

It is found in the cell membrane. Functionally, component of the A-type ATP synthase that produces ATP from ADP in the presence of a proton gradient across the membrane. In Ignicoccus hospitalis (strain KIN4/I / DSM 18386 / JCM 14125), this protein is A-type ATP synthase subunit E.